The chain runs to 346 residues: 4-amino-5-hydroxymethyl-2-methylpyrimidine phosphate synthase (346 aa).

At Lys62 the chain carries N6-(pyridoxal phosphate)lysine. His66 is an active-site residue. Gly114 to Gly117 serves as a coordination point for pyridoxal 5'-phosphate. The CCCFC; essential for catalytic activity, may be the site of iron coordination signature appears at Cys194–Cys198.

Belongs to the NMT1/THI5 family. In terms of assembly, homodimer. It depends on Fe cation as a cofactor.

It is found in the cytoplasm. Its subcellular location is the nucleus. The catalysed reaction is N(6)-(pyridoxal phosphate)-L-lysyl-[4-amino-5-hydroxymethyl-2-methylpyrimidine phosphate synthase] + L-histidyl-[4-amino-5-hydroxymethyl-2-methylpyrimidine phosphate synthase] + 2 Fe(3+) + 4 H2O = L-lysyl-[4-amino-5-hydroxymethyl-2-methylpyrimidine phosphate synthase] + (2S)-2-amino-5-hydroxy-4-oxopentanoyl-[4-amino-5-hydroxymethyl-2-methylpyrimidine phosphate synthase] + 4-amino-2-methyl-5-(phosphooxymethyl)pyrimidine + 3-oxopropanoate + 2 Fe(2+) + 2 H(+). The protein operates within cofactor biosynthesis; thiamine diphosphate biosynthesis. Responsible for the formation of the pyrimidine heterocycle in the thiamine biosynthesis pathway. Catalyzes the formation of hydroxymethylpyrimidine phosphate (HMP-P) from histidine and pyridoxal phosphate (PLP). The protein uses PLP and the active site histidine to form HMP-P, generating an inactive enzyme. The enzyme can only undergo a single turnover, which suggests it is a suicide enzyme. The chain is 4-amino-5-hydroxymethyl-2-methylpyrimidine phosphate synthase from Schizosaccharomyces pombe (strain 972 / ATCC 24843) (Fission yeast).